The chain runs to 126 residues: MPEPSKSAPAPKKGSKKAITKAQKKDGKKRKRSRKESYSIYVYKVLKQVHPDTGISSKAMGIMNSFVNDIFERIAGEASRLAHYNKRSTITSREIQTAVRLLLPGELAKHAVSEGTKAVTKYTSSK.

Residues Met-1–Lys-12 show a composition bias toward low complexity. Residues Met-1–Lys-35 form a disordered region. Pro-2 is subject to N-acetylproline. Glu-3 is subject to ADP-ribosyl glutamic acid. Lys-6 bears the N6-(2-hydroxyisobutyryl)lysine; alternate mark. Lys-6 carries the post-translational modification N6-(beta-hydroxybutyryl)lysine; alternate. Position 6 is an N6-acetyllysine; alternate (Lys-6). At Lys-6 the chain carries N6-butyryllysine; alternate. Lys-6 is modified (N6-crotonyllysine; alternate). Position 6 is an N6-lactoyllysine; alternate (Lys-6). Residue Lys-6 forms a Glycyl lysine isopeptide (Lys-Gly) (interchain with G-Cter in SUMO2); alternate linkage. The residue at position 7 (Ser-7) is an ADP-ribosylserine. Lys-12 carries the N6-(beta-hydroxybutyryl)lysine; alternate modification. Lys-12 and Lys-13 each carry N6-acetyllysine; alternate. N6-crotonyllysine; alternate is present on residues Lys-12 and Lys-13. Lys-12 carries the N6-lactoyllysine; alternate modification. N6-(2-hydroxyisobutyryl)lysine; alternate is present on Lys-13. The residue at position 15 (Ser-15) is a Phosphoserine; by STK4/MST1. 4 positions are modified to N6-acetyllysine; alternate: Lys-16, Lys-17, Lys-21, and Lys-24. 4 positions are modified to N6-crotonyllysine; alternate: Lys-16, Lys-17, Lys-21, and Lys-24. Residues Lys-16, Lys-17, Lys-21, and Lys-24 each carry the N6-lactoyllysine; alternate modification. Lys-17 and Lys-21 each carry N6-(beta-hydroxybutyryl)lysine; alternate. An N6-glutaryllysine; alternate modification is found at Lys-17. N6-(2-hydroxyisobutyryl)lysine; alternate occurs at positions 21 and 24. Lys-21 carries the N6-butyryllysine; alternate modification. A Glycyl lysine isopeptide (Lys-Gly) (interchain with G-Cter in SUMO2); alternate cross-link involves residue Lys-21. Lys-25 is subject to N6-(2-hydroxyisobutyryl)lysine. Lys-35 carries the N6-(2-hydroxyisobutyryl)lysine; alternate modification. An N6-(beta-hydroxybutyryl)lysine; alternate modification is found at Lys-35. Lys-35 bears the N6-crotonyllysine; alternate mark. Lys-35 bears the N6-glutaryllysine; alternate mark. Lys-35 carries the N6-succinyllysine; alternate modification. Lys-35 participates in a covalent cross-link: Glycyl lysine isopeptide (Lys-Gly) (interchain with G-Cter in ubiquitin); alternate. Glu-36 bears the PolyADP-ribosyl glutamic acid mark. A Phosphoserine; by AMPK modification is found at Ser-37. An N6-(2-hydroxyisobutyryl)lysine; alternate mark is found at Lys-44, Lys-47, and Lys-58. N6-lactoyllysine; alternate is present on Lys-44. N6-glutaryllysine; alternate occurs at positions 44 and 47. N6-methyllysine; alternate is present on Lys-47. Lys-58 is subject to N6,N6-dimethyllysine; alternate. The residue at position 80 (Arg-80) is a Dimethylated arginine. Lys-86 bears the N6-(2-hydroxyisobutyryl)lysine; alternate mark. N6-(beta-hydroxybutyryl)lysine; alternate is present on Lys-86. Position 86 is an N6-acetyllysine; alternate (Lys-86). Position 86 is an N6-lactoyllysine; alternate (Lys-86). Position 86 is an N6,N6,N6-trimethyllysine; alternate (Lys-86). An omega-N-methylarginine mark is found at Arg-87 and Arg-93. Lys-109 is subject to N6-(2-hydroxyisobutyryl)lysine; alternate. At Lys-109 the chain carries N6-lactoyllysine; alternate. Lys-109 is subject to N6-glutaryllysine; alternate. N6-methyllysine; alternate is present on Lys-109. An O-linked (GlcNAc) serine glycan is attached at Ser-113. At Thr-116 the chain carries Phosphothreonine. N6-(2-hydroxyisobutyryl)lysine; alternate is present on residues Lys-117 and Lys-121. Lys-117 and Lys-121 each carry N6-(beta-hydroxybutyryl)lysine; alternate. Residues Lys-117 and Lys-121 each carry the N6-lactoyllysine; alternate modification. 2 positions are modified to N6-glutaryllysine; alternate: Lys-117 and Lys-121. Lys-117 and Lys-121 each carry N6-succinyllysine; alternate. Lys-117 carries the N6-malonyllysine; alternate modification. N6-methylated lysine; alternate is present on Lys-117. Residue Lys-121 forms a Glycyl lysine isopeptide (Lys-Gly) (interchain with G-Cter in ubiquitin); alternate linkage.

The protein belongs to the histone H2B family. The nucleosome is a histone octamer containing two molecules each of H2A, H2B, H3 and H4 assembled in one H3-H4 heterotetramer and two H2A-H2B heterodimers. The octamer wraps approximately 147 bp of DNA. Post-translationally, monoubiquitination at Lys-35 (H2BK34Ub) by the MSL1/MSL2 dimer is required for histone H3 'Lys-4' (H3K4me) and 'Lys-79' (H3K79me) methylation and transcription activation at specific gene loci, such as HOXA9 and MEIS1 loci. Similarly, monoubiquitination at Lys-121 (H2BK120Ub) by the RNF20/40 complex gives a specific tag for epigenetic transcriptional activation and is also prerequisite for histone H3 'Lys-4' and 'Lys-79' methylation. It also functions cooperatively with the FACT dimer to stimulate elongation by RNA polymerase II. H2BK120Ub also acts as a regulator of mRNA splicing: deubiquitination by USP49 is required for efficient cotranscriptional splicing of a large set of exons. In terms of processing, phosphorylation at Ser-37 (H2BS36ph) by AMPK in response to stress promotes transcription. Phosphorylated on Ser-15 (H2BS14ph) by STK4/MST1 during apoptosis; which facilitates apoptotic chromatin condensation. Also phosphorylated on Ser-15 in response to DNA double strand breaks (DSBs), and in correlation with somatic hypermutation and immunoglobulin class-switch recombination. GlcNAcylation at Ser-113 promotes monoubiquitination of Lys-121. It fluctuates in response to extracellular glucose, and associates with transcribed genes. Post-translationally, ADP-ribosylated by PARP1 or PARP2 on Ser-7 (H2BS6ADPr) in response to DNA damage. H2BS6ADPr promotes recruitment of CHD1L. Mono-ADP-ribosylated on Glu-3 (H2BE2ADPr) by PARP3 in response to single-strand breaks. Poly ADP-ribosylation on Glu-36 (H2BE35ADPr) by PARP1 regulates adipogenesis: it inhibits phosphorylation at Ser-37 (H2BS36ph), thereby blocking expression of pro-adipogenetic genes. In terms of processing, crotonylation (Kcr) is specifically present in male germ cells and marks testis-specific genes in post-meiotic cells, including X-linked genes that escape sex chromosome inactivation in haploid cells. Crotonylation marks active promoters and enhancers and confers resistance to transcriptional repressors. It is also associated with post-meiotically activated genes on autosomes. Lactylated in macrophages by EP300/P300 by using lactoyl-CoA directly derived from endogenous or exogenous lactate, leading to stimulates gene transcription.

It is found in the nucleus. Its subcellular location is the chromosome. Functionally, core component of nucleosome. Nucleosomes wrap and compact DNA into chromatin, limiting DNA accessibility to the cellular machineries which require DNA as a template. Histones thereby play a central role in transcription regulation, DNA repair, DNA replication and chromosomal stability. DNA accessibility is regulated via a complex set of post-translational modifications of histones, also called histone code, and nucleosome remodeling. The polypeptide is Histone H2B type 1-B (Homo sapiens (Human)).